Reading from the N-terminus, the 602-residue chain is mRNA-capping enzyme subunit beta (602 aa).

Residues 1–249 (MSEHHSKRAL…NESNSEETHD (249 aa)) form a disordered region. Basic and acidic residues predominate over residues 15–42 (LVNHDENDKSKLQKLADNESSVRSDDNR). The span at 48–64 (NIVNGNNSNSDLNSNGV) shows a compositional bias: low complexity. A compositionally biased stretch (acidic residues) spans 65–76 (IEEDTDTDDDVG). A compositionally biased stretch (basic and acidic residues) spans 88-110 (DYDKQDRFSPEKKRIQARKKDTS). Residues 114–128 (PSISNESPSNSKESS) show a composition bias toward low complexity. The segment covering 141–169 (TDRKDSSEEKPDLTGPELVKEPDTNEYKR) has biased composition (basic and acidic residues). A compositionally biased stretch (polar residues) spans 171-181 (SIQSITNAEDT). Basic and acidic residues-rich tracts occupy residues 213-222 (TEEHKPKTET) and 231-249 (QENK…ETHD). The N6-GMP-lysine intermediate role is filled by K276.

The protein belongs to the fungal TPase family. As to quaternary structure, heterodimer. The mRNA-capping enzyme is composed of two separate chains alpha and beta, respectively a mRNA guanylyltransferase and an mRNA 5'-triphosphate monophosphatase. Mg(2+) serves as cofactor.

The protein resides in the nucleus. The catalysed reaction is a 5'-end triphospho-ribonucleoside in mRNA + H2O = a 5'-end diphospho-ribonucleoside in mRNA + phosphate + H(+). Its function is as follows. First step of mRNA capping. Converts the 5'-triphosphate end of a nascent mRNA chain into a diphosphate end. The sequence is that of mRNA-capping enzyme subunit beta (CET1) from Candida glabrata (strain ATCC 2001 / BCRC 20586 / JCM 3761 / NBRC 0622 / NRRL Y-65 / CBS 138) (Yeast).